We begin with the raw amino-acid sequence, 128 residues long: Large ribosomal subunit protein bL12 (128 aa).

It belongs to the bacterial ribosomal protein bL12 family. In terms of assembly, homodimer. Part of the ribosomal stalk of the 50S ribosomal subunit. Forms a multimeric L10(L12)X complex, where L10 forms an elongated spine to which 2 to 4 L12 dimers bind in a sequential fashion. Binds GTP-bound translation factors.

Functionally, forms part of the ribosomal stalk which helps the ribosome interact with GTP-bound translation factors. Is thus essential for accurate translation. In Synechococcus sp. (strain ATCC 27144 / PCC 6301 / SAUG 1402/1) (Anacystis nidulans), this protein is Large ribosomal subunit protein bL12.